Consider the following 83-residue polypeptide: U5-theraphotoxin-Hs1a 6 (83 aa).

A signal peptide spans 1–21; it reads MKTSMFLTLTGLVLLFVVCYA. A propeptide spanning residues 22–49 is cleaved from the precursor; sequence SESEEKEFPKELLSSIFAADSDFKVEER. Disulfide bonds link Cys51/Cys63, Cys56/Cys68, and Cys62/Cys75.

Belongs to the neurotoxin 10 (Hwtx-1) family. 51 (Hntx-8) subfamily. Hntx-8 sub-subfamily. As to expression, expressed by the venom gland.

It is found in the secreted. Agglutinates erythrocytes. This Cyriopagopus schmidti (Chinese bird spider) protein is U5-theraphotoxin-Hs1a 6.